Consider the following 180-residue polypeptide: Inner membrane-spanning protein YciB (180 aa).

Transmembrane regions (helical) follow at residues L4 to I24, Q25 to I45, L52 to N72, I76 to I96, I118 to V138, and F150 to L170.

Belongs to the YciB family.

Its subcellular location is the cell inner membrane. Functionally, plays a role in cell envelope biogenesis, maintenance of cell envelope integrity and membrane homeostasis. This is Inner membrane-spanning protein YciB from Rickettsia massiliae (strain Mtu5).